The chain runs to 375 residues: Actin, cytoplasmic (375 aa).

Belongs to the actin family.

It is found in the cytoplasm. The protein resides in the cytoskeleton. It catalyses the reaction ATP + H2O = ADP + phosphate + H(+). Functionally, actins are highly conserved proteins that are involved in various types of cell motility and are ubiquitously expressed in all eukaryotic cells. The sequence is that of Actin, cytoplasmic from Sterkiella nova (Ciliate).